The primary structure comprises 67 residues: Ferredoxin FdxE (67 aa).

Residues Cys-10, Val-11, Gln-15, Cys-16, and Cys-54 each contribute to the [3Fe-4S] cluster site.

As to quaternary structure, interacts with the cytochrome P450 143 with high affinity (Kd=84 nM). [3Fe-4S] cluster serves as cofactor.

Functionally, ferredoxin that is the redox partner of cytochrome CYP143, a cytochrome P450 encoded by an adjacent gene. The protein is Ferredoxin FdxE of Mycobacterium tuberculosis (strain ATCC 25618 / H37Rv).